Consider the following 121-residue polypeptide: Large ribosomal subunit protein bL12 (121 aa).

The protein belongs to the bacterial ribosomal protein bL12 family. Homodimer. Part of the ribosomal stalk of the 50S ribosomal subunit. Forms a multimeric L10(L12)X complex, where L10 forms an elongated spine to which 2 to 4 L12 dimers bind in a sequential fashion. Binds GTP-bound translation factors.

Forms part of the ribosomal stalk which helps the ribosome interact with GTP-bound translation factors. Is thus essential for accurate translation. The sequence is that of Large ribosomal subunit protein bL12 from Streptococcus suis (strain 98HAH33).